Here is a 153-residue protein sequence, read N- to C-terminus: Putative tRNA (cytidine(34)-2'-O)-methyltransferase (153 aa).

S-adenosyl-L-methionine is bound by residues G102, I122, and S131.

This sequence belongs to the class IV-like SAM-binding methyltransferase superfamily. RNA methyltransferase TrmH family. TrmL subfamily.

It is found in the cytoplasm. It catalyses the reaction cytidine(34) in tRNA + S-adenosyl-L-methionine = 2'-O-methylcytidine(34) in tRNA + S-adenosyl-L-homocysteine + H(+). It carries out the reaction 5-carboxymethylaminomethyluridine(34) in tRNA(Leu) + S-adenosyl-L-methionine = 5-carboxymethylaminomethyl-2'-O-methyluridine(34) in tRNA(Leu) + S-adenosyl-L-homocysteine + H(+). Its function is as follows. Could methylate the ribose at the nucleotide 34 wobble position in tRNA. In Synechocystis sp. (strain ATCC 27184 / PCC 6803 / Kazusa), this protein is Putative tRNA (cytidine(34)-2'-O)-methyltransferase.